Here is a 660-residue protein sequence, read N- to C-terminus: tRNA 5-methylaminomethyl-2-thiouridine biosynthesis bifunctional protein MnmC (660 aa).

The segment at 1–242 (MTDRIVPATL…KRAMLVGEFA (242 aa)) is tRNA (mnm(5)s(2)U34)-methyltransferase. The segment at 266–660 (IGAGLAGCAV…VRALRHGRVA (395 aa)) is FAD-dependent cmnm(5)s(2)U34 oxidoreductase.

It in the N-terminal section; belongs to the methyltransferase superfamily. tRNA (mnm(5)s(2)U34)-methyltransferase family. This sequence in the C-terminal section; belongs to the DAO family. FAD serves as cofactor.

Its subcellular location is the cytoplasm. It catalyses the reaction 5-aminomethyl-2-thiouridine(34) in tRNA + S-adenosyl-L-methionine = 5-methylaminomethyl-2-thiouridine(34) in tRNA + S-adenosyl-L-homocysteine + H(+). In terms of biological role, catalyzes the last two steps in the biosynthesis of 5-methylaminomethyl-2-thiouridine (mnm(5)s(2)U) at the wobble position (U34) in tRNA. Catalyzes the FAD-dependent demodification of cmnm(5)s(2)U34 to nm(5)s(2)U34, followed by the transfer of a methyl group from S-adenosyl-L-methionine to nm(5)s(2)U34, to form mnm(5)s(2)U34. In Burkholderia pseudomallei (strain K96243), this protein is tRNA 5-methylaminomethyl-2-thiouridine biosynthesis bifunctional protein MnmC.